The primary structure comprises 180 residues: UPF0227 protein KPN78578_10770 (180 aa).

It belongs to the UPF0227 family.

This is UPF0227 protein KPN78578_10770 from Klebsiella pneumoniae subsp. pneumoniae (strain ATCC 700721 / MGH 78578).